The sequence spans 348 residues: sn-glycerol-3-phosphate import ATP-binding protein UgpC (348 aa).

The 232-residue stretch at 4-235 folds into the ABC transporter domain; sequence IQLSNIKKQY…PETTFVADFI (232 aa). Residue 37–44 participates in ATP binding; it reads GPSGCGKS.

This sequence belongs to the ABC transporter superfamily. sn-glycerol-3-phosphate importer (TC 3.A.1.1.3) family. As to quaternary structure, the complex is composed of two ATP-binding proteins (UgpC), two transmembrane proteins (UgpA and UgpE) and a solute-binding protein (UgpB).

The protein localises to the cell inner membrane. The enzyme catalyses sn-glycerol 3-phosphate(out) + ATP + H2O = sn-glycerol 3-phosphate(in) + ADP + phosphate + H(+). Part of the ABC transporter complex UgpBAEC involved in sn-glycerol-3-phosphate (G3P) import. Responsible for energy coupling to the transport system. In Bartonella quintana (strain Toulouse) (Rochalimaea quintana), this protein is sn-glycerol-3-phosphate import ATP-binding protein UgpC.